The chain runs to 458 residues: tRNA modification GTPase MnmE (458 aa).

(6S)-5-formyl-5,6,7,8-tetrahydrofolate is bound by residues arginine 28, glutamate 85, and lysine 124. Positions 220–381 constitute a TrmE-type G domain; it reads GMNVVIAGRP…LKEHLKAVMG (162 aa). Asparagine 230 serves as a coordination point for K(+). Residues 230 to 235, 249 to 255, and 274 to 277 contribute to the GTP site; these read NAGKSS, TDIEGTT, and DTAG. Serine 234 lines the Mg(2+) pocket. Residues threonine 249, isoleucine 251, and threonine 254 each contribute to the K(+) site. Threonine 255 lines the Mg(2+) pocket. Residue lysine 458 coordinates (6S)-5-formyl-5,6,7,8-tetrahydrofolate.

This sequence belongs to the TRAFAC class TrmE-Era-EngA-EngB-Septin-like GTPase superfamily. TrmE GTPase family. As to quaternary structure, homodimer. Heterotetramer of two MnmE and two MnmG subunits. K(+) serves as cofactor.

It localises to the cytoplasm. In terms of biological role, exhibits a very high intrinsic GTPase hydrolysis rate. Involved in the addition of a carboxymethylaminomethyl (cmnm) group at the wobble position (U34) of certain tRNAs, forming tRNA-cmnm(5)s(2)U34. In Chromohalobacter salexigens (strain ATCC BAA-138 / DSM 3043 / CIP 106854 / NCIMB 13768 / 1H11), this protein is tRNA modification GTPase MnmE.